The primary structure comprises 172 residues: Small ribosomal subunit protein uS5 (172 aa).

The S5 DRBM domain occupies 17-80 (LKEKMIAVNR…EEARRNMTKV (64 aa)).

The protein belongs to the universal ribosomal protein uS5 family. As to quaternary structure, part of the 30S ribosomal subunit. Contacts proteins S4 and S8.

With S4 and S12 plays an important role in translational accuracy. Functionally, located at the back of the 30S subunit body where it stabilizes the conformation of the head with respect to the body. This chain is Small ribosomal subunit protein uS5, found in Polaromonas sp. (strain JS666 / ATCC BAA-500).